A 351-amino-acid polypeptide reads, in one-letter code: MSIVQLDHVSVTFKRKKAADVQAVQDVTLHIEKGDIYGIVGFSGAGKSTLVRTINLLQKPTAGDVVVGGVDFVKDGKQVISGKDLQARRRKIGMIFQQFNLLNETTVIENIAFALKHSDLSDDELEEKCHKLLKLVDLEDKANAYPAQLSGGQQQRVAIARALANDPEILLSDEATSALDPQTTIQILDLLKKLNRELGLTIVLITHEMAAVKKIANKVAVMENGRVVENGNLRDVFLAPKAELTQKFVGGSLAVVDTLKSLNISLAENEALYQLVYSLNNVAKSIIIELYREVGVEASMLYGNVEVLADEPVGTLLVTVKGDADKQKVTLKFLSDEGVTVTELDERGNRL.

Positions 4-249 constitute an ABC transporter domain; it reads VQLDHVSVTF…PKAELTQKFV (246 aa). 41–48 contributes to the ATP binding site; it reads GFSGAGKS.

This sequence belongs to the ABC transporter superfamily. Methionine importer (TC 3.A.1.24) family. The complex is composed of two ATP-binding proteins (MetN), two transmembrane proteins (MetI) and a solute-binding protein (MetQ).

The protein resides in the cell membrane. The enzyme catalyses L-methionine(out) + ATP + H2O = L-methionine(in) + ADP + phosphate + H(+). It carries out the reaction D-methionine(out) + ATP + H2O = D-methionine(in) + ADP + phosphate + H(+). Its function is as follows. Part of the ABC transporter complex MetNIQ involved in methionine import. Responsible for energy coupling to the transport system. This Lactobacillus delbrueckii subsp. bulgaricus (strain ATCC BAA-365 / Lb-18) protein is Methionine import ATP-binding protein MetN.